The following is a 413-amino-acid chain: Metacaspase-1A (413 aa).

Residues 1 to 104 (MQNHHHQQSS…PTDPVAFGHG (104 aa)) are disordered. Pro residues predominate over residues 36–47 (SPQPGYGAPPPH). The segment covering 49-58 (GYGQPPSGYG) has biased composition (low complexity). Polar residues predominate over residues 75–85 (GMNQYQNTYSH). Residues His-204 and Cys-260 contribute to the active site.

The protein belongs to the peptidase C14B family.

In terms of biological role, involved in cell death (apoptosis). Required for the apoptotic-like loss of membrane phospholipid asymmetry at stationary phase and facilitates growth under conditions of endoplasmic reticulum stress. The chain is Metacaspase-1A (casA) from Aspergillus fumigatus (strain CBS 144.89 / FGSC A1163 / CEA10) (Neosartorya fumigata).